The following is a 214-amino-acid chain: Large ribosomal subunit protein uL3 (214 aa).

The interval 134–153 (ATHGNSLSHRAPGSIGQNQT) is disordered. Q152 is subject to N5-methylglutamine.

Belongs to the universal ribosomal protein uL3 family. In terms of assembly, part of the 50S ribosomal subunit. Forms a cluster with proteins L14 and L19. In terms of processing, methylated by PrmB.

One of the primary rRNA binding proteins, it binds directly near the 3'-end of the 23S rRNA, where it nucleates assembly of the 50S subunit. The chain is Large ribosomal subunit protein uL3 from Buchnera aphidicola subsp. Baizongia pistaciae (strain Bp).